A 156-amino-acid chain; its full sequence is Bacterial ferritin (156 aa).

One can recognise a Ferritin-like diiron domain in the interval 1–146; that stretch reads MKGKPAVLAQ…KQLGLIEKIG (146 aa). The Fe cation site is built by glutamate 18, glutamate 51, histidine 54, glutamate 94, glutamate 128, and histidine 131.

Belongs to the bacterioferritin family. In terms of assembly, the bacterioferritin (BFR) complex is formed of 24 subunits (BfrA and BfrB) of unknown stoichiometry. The BFR is arranged as 12 dimers that are packed together to form an approximately spherical molecule with a central cavity, in which large amounts of iron can be deposited.

It localises to the cytoplasm. It catalyses the reaction 4 Fe(2+) + O2 + 4 H(+) = 4 Fe(3+) + 2 H2O. The catalysed reaction is Fe(2+)(in) = Fe(2+)(out). Functionally, part of the iron-storage bacterioferritin (BFR) complex which stores about 50% of intracellular iron. Iron-storage protein, whose ferroxidase center binds Fe(2+), oxidizes it using dioxygen to Fe(3+), and participates in the subsequent Fe(3+) oxide mineral core formation within the central cavity of the BFR protein shell. BFR rapidly binds iron in labeling experiments in vivo during iron-limiting conditions. This chain is Bacterial ferritin, found in Synechocystis sp. (strain ATCC 27184 / PCC 6803 / Kazusa).